Consider the following 345-residue polypeptide: MKEFDLESYDYDLPKELIANYPILPKEKAKLLVYERRSQKITHTTFEHVLDFFPKNALVVLNDTKVIKARIFGSKHAFLPSKTTEVFFHRFFKDNTALTQIKGKIKVGDKIFFDAHYHAEVLELLHNGQRLIAFYGNKTPLNQANILKLLEQYGHMPLPPYIKRADESLDAHEYQSVFAKHMGAVAAPTASLHFSQNTLEKLLKDFKHAFLTLHVGAGTFLGVETKDIREHQIHTEVLRIPKKSQEILQKSQEILCIGTTALRSVEYFKRLENPNQEAFECDIFLHLANPILHVNYLLTNFHLPKSSLLMLVSAMVGLEKTKEIYQIAIEKKYRFYSYGDGMLIL.

This sequence belongs to the QueA family. In terms of assembly, monomer.

The protein resides in the cytoplasm. It catalyses the reaction 7-aminomethyl-7-carbaguanosine(34) in tRNA + S-adenosyl-L-methionine = epoxyqueuosine(34) in tRNA + adenine + L-methionine + 2 H(+). It functions in the pathway tRNA modification; tRNA-queuosine biosynthesis. Transfers and isomerizes the ribose moiety from AdoMet to the 7-aminomethyl group of 7-deazaguanine (preQ1-tRNA) to give epoxyqueuosine (oQ-tRNA). The sequence is that of S-adenosylmethionine:tRNA ribosyltransferase-isomerase from Helicobacter pylori (strain Shi470).